The chain runs to 251 residues: Flap endonuclease Xni (251 aa).

Asp-104 contacts Mg(2+). The 90-residue stretch at 160 to 249 folds into the 5'-3' exonuclease domain; it reads VLPRQLPDYW…IDGNLQQLRL (90 aa). 5 residues coordinate K(+): Leu-171, Ala-172, Pro-180, Val-182, and Ile-185. Residues 184 to 189 are interaction with DNA; the sequence is GIGPKS.

It belongs to the Xni family. The cofactor is Mg(2+). It depends on K(+) as a cofactor.

In terms of biological role, has flap endonuclease activity. During DNA replication, flap endonucleases cleave the 5'-overhanging flap structure that is generated by displacement synthesis when DNA polymerase encounters the 5'-end of a downstream Okazaki fragment. The chain is Flap endonuclease Xni from Salmonella choleraesuis (strain SC-B67).